Reading from the N-terminus, the 497-residue chain is ATP synthase subunit alpha 2 (497 aa).

ATP is bound at residue 167–174 (GERATGKT).

It belongs to the ATPase alpha/beta chains family. F-type ATPases have 2 components, CF(1) - the catalytic core - and CF(0) - the membrane proton channel. CF(1) has five subunits: alpha(3), beta(3), gamma(1), delta(1), epsilon(1). CF(0) has four main subunits: a(1), b(1), b'(1) and c(9-12).

It localises to the cell inner membrane. It catalyses the reaction ATP + H2O + 4 H(+)(in) = ADP + phosphate + 5 H(+)(out). Functionally, produces ATP from ADP in the presence of a proton gradient across the membrane. The alpha chain is a regulatory subunit. The polypeptide is ATP synthase subunit alpha 2 (Cereibacter sphaeroides (strain ATCC 17023 / DSM 158 / JCM 6121 / CCUG 31486 / LMG 2827 / NBRC 12203 / NCIMB 8253 / ATH 2.4.1.) (Rhodobacter sphaeroides)).